The chain runs to 417 residues: MAGDNPENKDASMLDVSDAASNTTINGKHSADSTNEASLAYTFSQMNVDNPNELEPQHPLRHKSSLIFNDDDDDEIPPYSNHAENGSGETFDSDDDIDASSSSSIDSNEGDIHDADMTGNTLQKMDYQPSQQPDSLQNQGFQQQQEQQQGTVEGKKGRAMMFPVDITWQQGGNKVYVTGSFTGWRKMIGLVPVPGQPGLMHVKLQLPPGTHRFRFIVDNELRFSDYLPTATDQMGNFVNYMEVSAPPDWGNEPQQHLAEKKANHVDDSKLSKRPMSARSRIALEIEKEPDDMGDGYTRFHDETPAKPNLEYTQDIPAVFTDPNVMEQYYLTLDQQQNNHQNMAWLTPPQLPPHLENVILNSYSNAQTDNTSGALPIPNHVILNHLATSSIKHNTLCVASIVRYKQKYVTQILYTPLQ.

The segment covering 1–12 (MAGDNPENKDAS) has biased composition (basic and acidic residues). The disordered stretch occupies residues 1–37 (MAGDNPENKDASMLDVSDAASNTTINGKHSADSTNEA). Ser12, Ser21, Ser44, and Ser135 each carry phosphoserine. Polar residues predominate over residues 19–37 (AASNTTINGKHSADSTNEA). Disordered regions lie at residues 64-155 (SSLI…VEGK) and 250-269 (GNEPQQHLAEKKANHVDDSK). The segment covering 118 to 136 (TGNTLQKMDYQPSQQPDSL) has biased composition (polar residues). The span at 137–149 (QNQGFQQQQEQQQ) shows a compositional bias: low complexity. The interval 152-342 (VEGKKGRAMM…DQQQNNHQNM (191 aa)) is kinase-interacting sequence (KIS); required for interaction with SNF1. The segment covering 257–269 (LAEKKANHVDDSK) has biased composition (basic and acidic residues). 2 positions are modified to phosphoserine: Ser276 and Ser279. The tract at residues 343–417 (AWLTPPQLPP…VTQILYTPLQ (75 aa)) is association with SNF1 kinase complex (ASC) domain; required for interaction with SNF4.

The protein belongs to the 5'-AMP-activated protein kinase beta subunit family. Component of the SNF1 kinase complex, a heterotrimeric complex composed of the catalytic alpha subunit SNF1, one of the three related beta subunits SIP1, SIP2 or GAL83, and the regulatory gamma subunit SNF4. The beta subunit serves as a bridge between the catalytic and the regulatory subunit. Interacts (via KIS domain) with SNF1. Interacts (via ASC domain) with SNF4. Interacts with REE1. Phosphorylated by SNF1 in vitro.

It localises to the cytoplasm. It is found in the nucleus. Functionally, beta subunit of the SNF1 kinase complex, which is required for transcriptional, metabolic, and developmental adaptations in response to glucose limitation. Has a structural role, mediating heterotrimer formation, and a regulatory role, defining carbon source-regulated subcellular location and substrate specificity of the SNF1 kinase complex. Promotes the relocalization of the SNF1 kinase complex to the nucleus upon shift to nonfermentable carbon sources. This Saccharomyces cerevisiae (strain ATCC 204508 / S288c) (Baker's yeast) protein is SNF1 protein kinase subunit beta-3 (GAL83).